A 411-amino-acid polypeptide reads, in one-letter code: MRFVAPPPRSGDNSPSPSPSSGISEEILSRSSDPPLEFSPPLIAMVVVLAAAFLFVTYSRLISRRFLSPLFRRFRRWRCRRRRLLHLSSASSASTSSSDLRSFSPFPFDSFHYSSYSPYGLDDSVIKTLPLFLYSAAACTGKPAVGKTSAANCRDCAVCLLEFEEGDYVRTLPLCFHAFHLECIDEWLRSHPNCPLCRTAILGSAGVLTPMSPFVPLMAPRIRPSLDDEENNAIIIRGEITPSRSNWNTIAADTTNDQEIRASVEEQSSPAISRFRELKRSYSFECERESESERVTMEPATVSPWRYRRSTWNKRQSPFGNLISKSRVFSFRYYRSTKSPFFRRRSSAGVFYPISERIPATGSSSRRTKSMTSPMFFRTAPHSSSRLRCGDPEALLSPERWRRRDTCRAEM.

Residues 1–32 are disordered; the sequence is MRFVAPPPRSGDNSPSPSPSSGISEEILSRSS. Over residues 10-21 the composition is skewed to low complexity; sequence SGDNSPSPSPSS. The chain crosses the membrane as a helical span at residues 36 to 56; that stretch reads LEFSPPLIAMVVVLAAAFLFV. The RING-type; atypical zinc-finger motif lies at 156–198; that stretch reads CAVCLLEFEEGDYVRTLPLCFHAFHLECIDEWLRSHPNCPLCR.

This sequence belongs to the RING-type zinc finger family. ATL subfamily.

It is found in the membrane. It catalyses the reaction S-ubiquitinyl-[E2 ubiquitin-conjugating enzyme]-L-cysteine + [acceptor protein]-L-lysine = [E2 ubiquitin-conjugating enzyme]-L-cysteine + N(6)-ubiquitinyl-[acceptor protein]-L-lysine.. Its pathway is protein modification; protein ubiquitination. In Arabidopsis thaliana (Mouse-ear cress), this protein is RING-H2 finger protein ATL65 (ATL65).